The primary structure comprises 729 residues: Solute carrier family 15 member 2 (729 aa).

Positions 1–34 (MNPFQQNESKETLFSPVSTEETPPRLSSPAKKTP) are disordered. At 1–57 (MNPFQQNESKETLFSPVSTEETPPRLSSPAKKTPPKICGSNYPLSIAFIVVNEFCER) the chain is on the cytoplasmic side. A Phosphoserine modification is found at Ser9. A Phosphothreonine modification is found at Thr12. Ser28 bears the Phosphoserine mark. Residues 58–78 (FSYYGMKAVLTLYFLYFLHWN) form a helical membrane-spanning segment. The Extracellular segment spans residues 79–87 (EDTSTSVYH). A helical membrane pass occupies residues 88 to 108 (AFSSLCYFTPILGAAIADSWL). Residues 109-113 (GKFKT) are Cytoplasmic-facing. Residues 114–134 (IIYLSLVNVLGHVIKSLSAFP) form a helical membrane-spanning segment. The Extracellular segment spans residues 135-139 (ILGGK). The helical transmembrane segment at 140–160 (VVHTVLSLVGLCLIALGTGGI) threads the bilayer. Over 161-183 (KPCVAAFGGDQFEEKHAEERTRY) the chain is Cytoplasmic. The chain crosses the membrane as a helical span at residues 184-204 (FSGFYLAINAGSLISTFITPM). Residues 205–217 (LRGDVQCFGEDCY) are Extracellular-facing. The chain crosses the membrane as a helical span at residues 218-238 (ALAFGVPGLLMVIALVVFAMG). At 239-295 (SKMYKKPPPEGNIVAQVVKCIWFAISNRFKNRSEDIPKRQHWLDWAAEKYPKQLIMD) the chain is on the cytoplasmic side. A helical membrane pass occupies residues 296-316 (VKTLTRVLFLYIPLPMFWALL). Residues 317–343 (DQQGSRWTLQATKMNGNLGFFVLQPDQ) lie on the Extracellular side of the membrane. The chain crosses the membrane as a helical span at residues 344–364 (MQVLNPLLVLIFIPLFDLVIY). At 365 to 380 (RLISKCGINFTSLRKM) the chain is on the cytoplasmic side. A helical transmembrane segment spans residues 381–401 (AVGMVLACLAFAAAATVEIKI). The Extracellular segment spans residues 402-611 (NEMAPPQPGS…PANKVSIAWQ (210 aa)). The tract at residues 402–611 (NEMAPPQPGS…PANKVSIAWQ (210 aa)) is extracellular domain (ECD). 5 N-linked (GlcNAc...) asparagine glycosylation sites follow: Asn435, Asn472, Asn508, Asn528, and Asn587. The helical transmembrane segment at 612-632 (LPQYALVTAGEVMFSVTGLEF) threads the bilayer. Residues 633–643 (SYSQAPSSMKS) lie on the Cytoplasmic side of the membrane. The chain crosses the membrane as a helical span at residues 644 to 664 (VLQAAWLLTVAIGNIIVLVVA). Residues 665-674 (QFSGLVQWAE) are Extracellular-facing. The helical transmembrane segment at 675–695 (FVLFSCLLLVVCLIFSIMGYY) threads the bilayer. Topologically, residues 696 to 729 (YIPIKSEDIQGPEDKQIPHMQGNMINLETKKTKL) are cytoplasmic.

This sequence belongs to the major facilitator superfamily. Proton-dependent oligopeptide transporter (POT/PTR) (TC 2.A.17) family. As to quaternary structure, interacts (via extracellular domain region) with trypsin. Strongly expressed in kidney. Also detected in brain, lung, liver and heart.

The protein localises to the apical cell membrane. The protein resides in the cytoplasmic vesicle. Its subcellular location is the phagosome membrane. It is found in the cell membrane. It carries out the reaction a dipeptide(out) + 2 H(+)(out) = a dipeptide(in) + 2 H(+)(in). The catalysed reaction is N-acetyl-D-muramoyl-L-alanyl-D-isoglutamine(out) + 3 H(+)(out) = N-acetyl-D-muramoyl-L-alanyl-D-isoglutamine(in) + 3 H(+)(in). The enzyme catalyses glycyl-L-leucine(out) + 2 H(+)(out) = glycyl-L-leucine(in) + 2 H(+)(in). It catalyses the reaction glycyl-L-lysine(out) + 2 H(+)(out) = glycyl-L-lysine(in) + 2 H(+)(in). It carries out the reaction glycyl-L-glutamate(out) + 3 H(+)(out) = glycyl-L-glutamate(in) + 3 H(+)(in). The catalysed reaction is L-alanyl-L-alanine(out) + 2 H(+)(out) = L-alanyl-L-alanine(in) + 2 H(+)(in). The enzyme catalyses an L-amino acid tripeptide(out) + 2 H(+)(out) = an L-amino acid tripeptide(in) + 2 H(+)(in). It catalyses the reaction carnosine(out) + 2 H(+)(out) = carnosine(in) + 2 H(+)(in). Proton-coupled amino-acid transporter that transports oligopeptides of 2 to 4 amino acids with a preference for dipeptides. Transports neutral and anionic dipeptides with a proton to peptide stoichiometry of 2:1 or 3:1. In kidney, involved in the absorption of circulating di- and tripeptides from the glomerular filtrate. Can also transport beta-lactam antibiotics, such as the aminocephalosporin cefadroxil, and other antiviral and anticancer drugs. Transports the dipeptide-like aminopeptidase inhibitor bestatin. Also able to transport carnosine. Involved in innate immunity by promoting the detection of microbial pathogens by NOD-like receptors (NLRs). Mediates transport of bacterial peptidoglycans across the plasma membrane or, in macrophages, the phagosome membrane: catalyzes the transport of certain bacterial peptidoglycans, such as muramyl dipeptide (MDP), the NOD2 ligand. The chain is Solute carrier family 15 member 2 from Oryctolagus cuniculus (Rabbit).